The sequence spans 1011 residues: Histone deacetylase 9 (1011 aa).

Phosphoserine is present on Ser-22. The segment at 23-27 (PLDLR) is interaction with CTBP1. Disordered regions lie at residues 110–139 (RQEQEVERHRREQQLPPLRGKDRGRERAVA), 183–249 (TSLD…KDGN), and 262–304 (TESS…EQMV). Positions 136-154 (RAVASTEVKQKLQEFLLSK) are interaction with MEF2. The interaction with MAPK10 stretch occupies residues 175–343 (LWYTAAHHTS…LPAVPSQLNA (169 aa)). Polar residues predominate over residues 185–199 (LDQSSPPLSGTSPSY). Basic and acidic residues predominate over residues 208-219 (DAKDDFPLRKTA). Residues 218–261 (TASEPNLKVRSRLKQKVAERRSSPLLRRKDGNVVTSFKKRMFEV) form an interaction with ETV6 region. Phosphoserine occurs at positions 220 and 240. Positions 233–248 (KVAERRSSPLLRRKDG) are enriched in basic and acidic residues. Low complexity predominate over residues 262–285 (TESSVSSSSPGSGPSSPNNGPTGS). Position 451 is a phosphoserine (Ser-451). Positions 494–536 (QLKQPGSHLEEAEEELQGDQAMQEDRAPSSGNSTRSDSSACVD) are disordered. Positions 522–532 (SSGNSTRSDSS) are enriched in polar residues. Ser-554 bears the Phosphoserine mark. The histone deacetylase stretch occupies residues 631-978 (SATGIAYDPL…VNALLGNELE (348 aa)). Zn(2+) contacts are provided by Cys-646, Cys-648, His-654, and Cys-731. His-783 is a catalytic residue.

This sequence belongs to the histone deacetylase family. HD type 2 subfamily. As to quaternary structure, homodimer. Interacts with CTBP1. The phosphorylated form interacts with 14-3-3. Interacts with HDAC1 and HDAC3, and probably with HDAC4 and HDAC5. Interacts with MEF2, MAPK10, ETV6, NCOR1 and BCL6. Interacts with FOXP3 in the absence of T-cell stimulation. Phosphorylated on Ser-220 and Ser-450; which promotes 14-3-3-binding, impairs interaction with MEF2, and antagonizes antimyogenic activity. Phosphorylated on Ser-240; which impairs nuclear accumulation. Isoform 7 is phosphorylated on Tyr-1010. Phosphorylated by the PKC kinases PKN1 and PKN2, impairing nuclear import. In terms of processing, sumoylated. As to expression, broadly expressed, with highest levels in brain, heart, muscle and testis. Isoform 3 is present in human bladder carcinoma cells (at protein level).

The protein localises to the nucleus. It carries out the reaction N(6)-acetyl-L-lysyl-[histone] + H2O = L-lysyl-[histone] + acetate. With respect to regulation, inhibited by Trichostatin A (TSA) and suberoylanilide hydroxamic acid. Responsible for the deacetylation of lysine residues on the N-terminal part of the core histones (H2A, H2B, H3 and H4). Histone deacetylation gives a tag for epigenetic repression and plays an important role in transcriptional regulation, cell cycle progression and developmental events. Represses MEF2-dependent transcription. In terms of biological role, isoform 3 lacks active site residues and therefore is catalytically inactive. Represses MEF2-dependent transcription by recruiting HDAC1 and/or HDAC3. Seems to inhibit skeletal myogenesis and to be involved in heart development. Protects neurons from apoptosis, both by inhibiting JUN phosphorylation by MAPK10 and by repressing JUN transcription via HDAC1 recruitment to JUN promoter. This chain is Histone deacetylase 9 (HDAC9), found in Homo sapiens (Human).